Consider the following 265-residue polypeptide: UPF0354 protein GTNG_2723 (265 aa).

Belongs to the UPF0354 family.

This chain is UPF0354 protein GTNG_2723, found in Geobacillus thermodenitrificans (strain NG80-2).